The following is a 286-amino-acid chain: D-tagatose-1,6-bisphosphate aldolase subunit KbaY (286 aa).

Residue D82 is the Proton donor of the active site. Zn(2+)-binding residues include H83 and H180. G181 is a binding site for dihydroxyacetone phosphate. A Zn(2+)-binding site is contributed by H208. Dihydroxyacetone phosphate-binding positions include 209–211 (GAS) and 230–233 (NVAT).

This sequence belongs to the class II fructose-bisphosphate aldolase family. TagBP aldolase KbaY subfamily. Homotetramer. Forms a complex with KbaZ. It depends on Zn(2+) as a cofactor.

The catalysed reaction is D-tagatofuranose 1,6-bisphosphate = D-glyceraldehyde 3-phosphate + dihydroxyacetone phosphate. Its pathway is carbohydrate metabolism; D-tagatose 6-phosphate degradation; D-glyceraldehyde 3-phosphate and glycerone phosphate from D-tagatose 6-phosphate: step 2/2. Its function is as follows. Catalytic subunit of the tagatose-1,6-bisphosphate aldolase KbaYZ, which catalyzes the reversible aldol condensation of dihydroxyacetone phosphate (DHAP or glycerone-phosphate) with glyceraldehyde 3-phosphate (G3P) to produce tagatose 1,6-bisphosphate (TBP). Requires KbaZ subunit for full activity and stability. The sequence is that of D-tagatose-1,6-bisphosphate aldolase subunit KbaY from Escherichia coli O17:K52:H18 (strain UMN026 / ExPEC).